A 196-amino-acid chain; its full sequence is Peptide deformylase (196 aa).

2 residues coordinate Fe cation: C105 and H147. Residue E148 is part of the active site. H151 serves as a coordination point for Fe cation.

Belongs to the polypeptide deformylase family. The cofactor is Fe(2+).

The catalysed reaction is N-terminal N-formyl-L-methionyl-[peptide] + H2O = N-terminal L-methionyl-[peptide] + formate. Functionally, removes the formyl group from the N-terminal Met of newly synthesized proteins. Requires at least a dipeptide for an efficient rate of reaction. N-terminal L-methionine is a prerequisite for activity but the enzyme has broad specificity at other positions. In Christiangramia forsetii (strain DSM 17595 / CGMCC 1.15422 / KT0803) (Gramella forsetii), this protein is Peptide deformylase.